We begin with the raw amino-acid sequence, 652 residues long: Acetyl-coenzyme A synthetase (652 aa).

CoA is bound by residues 191–194 (RAGR), T311, and N335. ATP contacts are provided by residues 387 to 389 (GEP), 411 to 416 (DTWWQT), D500, and R515. Position 523 (S523) interacts with CoA. ATP is bound at residue R526. Mg(2+) is bound by residues V537, H539, and I542. R584 is a CoA binding site. An N6-acetyllysine modification is found at K609.

The protein belongs to the ATP-dependent AMP-binding enzyme family. It depends on Mg(2+) as a cofactor. In terms of processing, acetylated. Deacetylation by the SIR2-homolog deacetylase activates the enzyme.

It catalyses the reaction acetate + ATP + CoA = acetyl-CoA + AMP + diphosphate. In terms of biological role, catalyzes the conversion of acetate into acetyl-CoA (AcCoA), an essential intermediate at the junction of anabolic and catabolic pathways. Acs undergoes a two-step reaction. In the first half reaction, Acs combines acetate with ATP to form acetyl-adenylate (AcAMP) intermediate. In the second half reaction, it can then transfer the acetyl group from AcAMP to the sulfhydryl group of CoA, forming the product AcCoA. Its function is as follows. Enables the cell to use acetate during aerobic growth to generate energy via the TCA cycle, and biosynthetic compounds via the glyoxylate shunt. Acetylates CheY, the response regulator involved in flagellar movement and chemotaxis. The protein is Acetyl-coenzyme A synthetase of Yersinia pseudotuberculosis serotype I (strain IP32953).